The following is an 817-amino-acid chain: DNA mismatch repair protein MutS (817 aa).

604-611 (GPNMSGKS) contacts ATP.

Belongs to the DNA mismatch repair MutS family.

Its function is as follows. This protein is involved in the repair of mismatches in DNA. It is possible that it carries out the mismatch recognition step. This protein has a weak ATPase activity. In Petrotoga mobilis (strain DSM 10674 / SJ95), this protein is DNA mismatch repair protein MutS.